Consider the following 60-residue polypeptide: uncharacterized protein (60 aa).

The helical transmembrane segment at 33-55 (FRLLRGIFLITLVIWTVVWLKLL) threads the bilayer.

This sequence belongs to the HHV-5 UL2 protein family.

Its subcellular location is the host membrane. This is an uncharacterized protein from Human cytomegalovirus (strain AD169) (HHV-5).